A 138-amino-acid polypeptide reads, in one-letter code: Small ribosomal subunit protein uS17 (138 aa).

Composition is skewed to basic and acidic residues over residues 1-18 (MSEE…RAEA) and 43-55 (AFDR…QKDT). Residues 1-62 (MSEEERNRGA…KDTRRGRRKE (62 aa)) are disordered.

Belongs to the universal ribosomal protein uS17 family. In terms of assembly, part of the 30S ribosomal subunit.

In terms of biological role, one of the primary rRNA binding proteins, it binds specifically to the 5'-end of 16S ribosomal RNA. In Rubrobacter xylanophilus (strain DSM 9941 / JCM 11954 / NBRC 16129 / PRD-1), this protein is Small ribosomal subunit protein uS17.